Consider the following 699-residue polypeptide: Transketolase (699 aa).

Substrate is bound at residue His-45. Thiamine diphosphate contacts are provided by residues Thr-48, His-85, and 133-135; that span reads GPL. Residue Asp-177 participates in Mg(2+) binding. Thiamine diphosphate contacts are provided by Gly-178 and Asn-207. Positions 207 and 209 each coordinate Mg(2+). Positions 283, 378, and 405 each coordinate substrate. A thiamine diphosphate-binding site is contributed by His-283. Residue Glu-441 is the Proton donor of the active site. Thiamine diphosphate is bound at residue Phe-467. His-491, Asp-499, and Arg-552 together coordinate substrate.

This sequence belongs to the transketolase family. Homodimer. Requires Mg(2+) as cofactor. The cofactor is Ca(2+). Mn(2+) serves as cofactor. It depends on Co(2+) as a cofactor. Thiamine diphosphate is required as a cofactor.

It carries out the reaction D-sedoheptulose 7-phosphate + D-glyceraldehyde 3-phosphate = aldehydo-D-ribose 5-phosphate + D-xylulose 5-phosphate. In terms of biological role, catalyzes the transfer of a two-carbon ketol group from a ketose donor to an aldose acceptor, via a covalent intermediate with the cofactor thiamine pyrophosphate. The protein is Transketolase (tkt) of Mycobacterium leprae (strain TN).